A 72-amino-acid polypeptide reads, in one-letter code: Translation initiation factor IF-1 (72 aa).

Residues methionine 1–lysine 72 enclose the S1-like domain.

The protein belongs to the IF-1 family. Component of the 30S ribosomal translation pre-initiation complex which assembles on the 30S ribosome in the order IF-2 and IF-3, IF-1 and N-formylmethionyl-tRNA(fMet); mRNA recruitment can occur at any time during PIC assembly.

The protein localises to the cytoplasm. In terms of biological role, one of the essential components for the initiation of protein synthesis. Stabilizes the binding of IF-2 and IF-3 on the 30S subunit to which N-formylmethionyl-tRNA(fMet) subsequently binds. Helps modulate mRNA selection, yielding the 30S pre-initiation complex (PIC). Upon addition of the 50S ribosomal subunit IF-1, IF-2 and IF-3 are released leaving the mature 70S translation initiation complex. In Alkaliphilus metalliredigens (strain QYMF), this protein is Translation initiation factor IF-1.